A 139-amino-acid chain; its full sequence is Large ribosomal subunit protein uL16c (139 aa).

Belongs to the universal ribosomal protein uL16 family. As to quaternary structure, part of the 50S ribosomal subunit.

Its subcellular location is the plastid. It localises to the chloroplast. In Cicer arietinum (Chickpea), this protein is Large ribosomal subunit protein uL16c.